Consider the following 365-residue polypeptide: Probable ethanolamine-phosphate cytidylyltransferase (365 aa).

The tract at residues 344 to 365 (EERQRRKMGKNATEQTTIKTYA) is disordered. Residues 355–365 (ATEQTTIKTYA) are compositionally biased toward polar residues.

Belongs to the cytidylyltransferase family.

The catalysed reaction is phosphoethanolamine + CTP + H(+) = CDP-ethanolamine + diphosphate. The protein operates within phospholipid metabolism; phosphatidylethanolamine biosynthesis; phosphatidylethanolamine from ethanolamine: step 2/3. In Schizosaccharomyces pombe (strain 972 / ATCC 24843) (Fission yeast), this protein is Probable ethanolamine-phosphate cytidylyltransferase.